Consider the following 397-residue polypeptide: 1-deoxy-D-xylulose 5-phosphate reductoisomerase (397 aa).

NADPH is bound by residues Thr-12, Gly-13, Ser-14, Ile-15, Gly-38, Lys-39, Asn-40, and Asn-126. Lys-127 contacts 1-deoxy-D-xylulose 5-phosphate. An NADPH-binding site is contributed by Glu-128. Position 152 (Asp-152) interacts with Mn(2+). 4 residues coordinate 1-deoxy-D-xylulose 5-phosphate: Ser-153, Glu-154, Ser-188, and His-211. Residue Glu-154 participates in Mn(2+) binding. Gly-217 contributes to the NADPH binding site. Positions 224, 229, 230, and 233 each coordinate 1-deoxy-D-xylulose 5-phosphate. Position 233 (Glu-233) interacts with Mn(2+).

This sequence belongs to the DXR family. Mg(2+) serves as cofactor. The cofactor is Mn(2+).

It catalyses the reaction 2-C-methyl-D-erythritol 4-phosphate + NADP(+) = 1-deoxy-D-xylulose 5-phosphate + NADPH + H(+). The protein operates within isoprenoid biosynthesis; isopentenyl diphosphate biosynthesis via DXP pathway; isopentenyl diphosphate from 1-deoxy-D-xylulose 5-phosphate: step 1/6. In terms of biological role, catalyzes the NADPH-dependent rearrangement and reduction of 1-deoxy-D-xylulose-5-phosphate (DXP) to 2-C-methyl-D-erythritol 4-phosphate (MEP). The chain is 1-deoxy-D-xylulose 5-phosphate reductoisomerase from Haemophilus influenzae (strain ATCC 51907 / DSM 11121 / KW20 / Rd).